The chain runs to 97 residues: Sec-independent protein translocase protein TatA (97 aa).

Residues M1–T21 form a helical membrane-spanning segment. Positions G28–S97 are disordered. Residues G37–G56 show a composition bias toward basic and acidic residues. Positions Q78–Q87 are enriched in low complexity. Residues S88–S97 show a composition bias toward basic and acidic residues.

This sequence belongs to the TatA/E family. The Tat system comprises two distinct complexes: a TatABC complex, containing multiple copies of TatA, TatB and TatC subunits, and a separate TatA complex, containing only TatA subunits. Substrates initially bind to the TatABC complex, which probably triggers association of the separate TatA complex to form the active translocon.

The protein localises to the cell inner membrane. Part of the twin-arginine translocation (Tat) system that transports large folded proteins containing a characteristic twin-arginine motif in their signal peptide across membranes. TatA could form the protein-conducting channel of the Tat system. This is Sec-independent protein translocase protein TatA from Halorhodospira halophila (strain DSM 244 / SL1) (Ectothiorhodospira halophila (strain DSM 244 / SL1)).